A 465-amino-acid chain; its full sequence is Ribulose bisphosphate carboxylase large chain (465 aa).

At lysine 4 the chain carries N6,N6,N6-trimethyllysine. The substrate site is built by asparagine 113 and threonine 163. Residue lysine 165 is the Proton acceptor of the active site. Substrate is bound at residue lysine 167. The Mg(2+) site is built by lysine 191, aspartate 193, and glutamate 194. Position 191 is an N6-carboxylysine (lysine 191). Catalysis depends on histidine 284, which acts as the Proton acceptor. Arginine 285, histidine 317, and serine 369 together coordinate substrate.

Belongs to the RuBisCO large chain family. Type I subfamily. As to quaternary structure, heterohexadecamer of 8 large chains and 8 small chains; disulfide-linked. The disulfide link is formed within the large subunit homodimers. It depends on Mg(2+) as a cofactor. The disulfide bond which can form in the large chain dimeric partners within the hexadecamer appears to be associated with oxidative stress and protein turnover.

The protein resides in the plastid. It localises to the chloroplast. It carries out the reaction 2 (2R)-3-phosphoglycerate + 2 H(+) = D-ribulose 1,5-bisphosphate + CO2 + H2O. It catalyses the reaction D-ribulose 1,5-bisphosphate + O2 = 2-phosphoglycolate + (2R)-3-phosphoglycerate + 2 H(+). In terms of biological role, ruBisCO catalyzes two reactions: the carboxylation of D-ribulose 1,5-bisphosphate, the primary event in carbon dioxide fixation, as well as the oxidative fragmentation of the pentose substrate in the photorespiration process. Both reactions occur simultaneously and in competition at the same active site. This chain is Ribulose bisphosphate carboxylase large chain, found in Senega cruciata (Cross-leaved milkwort).